Consider the following 160-residue polypeptide: Protein cornichon homolog 3 (160 aa).

The Cytoplasmic portion of the chain corresponds to 1-10 (MAFTFAAFCY). The helical transmembrane segment at 11 to 31 (MLSLVLCAALIFFAIWHIIAF) threads the bilayer. The Lumenal segment spans residues 32 to 72 (DELRTDFKSPIDQCNPVHARERLRNIERICFLLRKLVLPEY). Residues 73-93 (SIHSLFCVMFLCAQEWLTLGL) traverse the membrane as a helical segment. Residues 94–138 (NVPLLFYHFWRYFHCPADSSELAYDPPVVMNADTLSYCQKEAWCK) are Cytoplasmic-facing. The chain crosses the membrane as a helical span at residues 139–159 (LAFYLLSFFYYLYCMIYTLVS). Residue serine 160 is a topological domain, lumenal.

This sequence belongs to the cornichon family. Acts as an auxiliary subunit for AMPA-selective glutamate receptors (AMPARs). Found in a complex with GRIA1, GRIA2, GRIA3, GRIA4, CNIH2, CACNG2, CACNG3, CACNG4, CACNG5, CACNG7 and CACNG8. Brain. Expressed in the neocortex, hippocampal formation, and cerebellum (at protein level).

It localises to the postsynaptic cell membrane. Its function is as follows. Regulates the trafficking and gating properties of AMPA-selective glutamate receptors (AMPARs). Promotes their targeting to the cell membrane and synapses and modulates their gating properties by regulating their rates of activation, deactivation and desensitization. This is Protein cornichon homolog 3 (Cnih3) from Rattus norvegicus (Rat).